Consider the following 137-residue polypeptide: Fatty acid-binding protein homolog 7 (137 aa).

The protein belongs to the calycin superfamily. Fatty-acid binding protein (FABP) family.

The chain is Fatty acid-binding protein homolog 7 (lbp-7) from Caenorhabditis elegans.